The chain runs to 463 residues: tRNA-2-methylthio-N(6)-dimethylallyladenosine synthase (463 aa).

The region spanning 19 to 135 is the MTTase N-terminal domain; that stretch reads RSYWITTFGC…LENLLGKVDL (117 aa). Positions 28, 64, 98, 170, 174, and 177 each coordinate [4Fe-4S] cluster. The region spanning 156-393 is the Radical SAM core domain; it reads RESSICGWVN…NALVEKTARN (238 aa). The TRAM domain maps to 396–463; that stretch reads QRYINNIESV…RPFSLTGELC (68 aa).

Belongs to the methylthiotransferase family. MiaB subfamily. Monomer. [4Fe-4S] cluster is required as a cofactor.

The protein resides in the cytoplasm. The enzyme catalyses N(6)-dimethylallyladenosine(37) in tRNA + (sulfur carrier)-SH + AH2 + 2 S-adenosyl-L-methionine = 2-methylsulfanyl-N(6)-dimethylallyladenosine(37) in tRNA + (sulfur carrier)-H + 5'-deoxyadenosine + L-methionine + A + S-adenosyl-L-homocysteine + 2 H(+). Its function is as follows. Catalyzes the methylthiolation of N6-(dimethylallyl)adenosine (i(6)A), leading to the formation of 2-methylthio-N6-(dimethylallyl)adenosine (ms(2)i(6)A) at position 37 in tRNAs that read codons beginning with uridine. This chain is tRNA-2-methylthio-N(6)-dimethylallyladenosine synthase, found in Prochlorococcus marinus (strain MIT 9312).